Reading from the N-terminus, the 28-residue chain is Cytochrome b6-f complex subunit 6 (28 aa).

Residues 2 to 22 (VEYLVILSGMFGLALACFFGL) traverse the membrane as a helical segment.

Belongs to the PetL family. The 4 large subunits of the cytochrome b6-f complex are cytochrome b6, subunit IV (17 kDa polypeptide, PetD), cytochrome f and the Rieske protein, while the 4 small subunits are PetG, PetL, PetM and PetN. The complex functions as a dimer.

The protein localises to the plastid. The protein resides in the cyanelle thylakoid membrane. In terms of biological role, component of the cytochrome b6-f complex, which mediates electron transfer between photosystem II (PSII) and photosystem I (PSI), cyclic electron flow around PSI, and state transitions. PetL is important for photoautotrophic growth as well as for electron transfer efficiency and stability of the cytochrome b6-f complex. This is Cytochrome b6-f complex subunit 6 from Cyanophora paradoxa.